Consider the following 179-residue polypeptide: Large ribosomal subunit protein uL6 (179 aa).

It belongs to the universal ribosomal protein uL6 family. Part of the 50S ribosomal subunit.

Its function is as follows. This protein binds to the 23S rRNA, and is important in its secondary structure. It is located near the subunit interface in the base of the L7/L12 stalk, and near the tRNA binding site of the peptidyltransferase center. The sequence is that of Large ribosomal subunit protein uL6 from Persephonella marina (strain DSM 14350 / EX-H1).